The chain runs to 709 residues: G1/S-specific cyclin-E (709 aa).

Disordered stretches follow at residues 1–30 (MGLN…NGEV), 43–149 (ISSS…NLSS), 162–205 (VDGQ…GSKQ), 221–289 (TVVT…PKHQ), and 642–709 (ALRA…RSNP). Composition is skewed to polar residues over residues 7-29 (SVCS…SNGE), 61-70 (PSTSFSSASQ), and 91-106 (CDSQ…TSNG). Residues Ser114, Ser115, Ser117, and Ser129 each carry the phosphoserine modification. Residues 162–175 (VDGQSTQELLSIRS) show a composition bias toward polar residues. Phosphoserine occurs at positions 187, 192, 195, and 198. A compositionally biased stretch (pro residues) spans 187-199 (SPLPDSPDSPPSP). Positions 228 to 258 (EDDDLLDDSCEDYSYDEDDEDDVEEEDDDVE) are enriched in acidic residues. Residues 260–277 (YSSTISPASSGCSQQQAV) show a composition bias toward polar residues. Thr651 carries the phosphothreonine modification. The segment covering 677–709 (SSTTTCCNTAASNKGGKSSSNNSVTSCSSRSNP) has biased composition (low complexity).

Belongs to the cyclin family. Cyclin E subfamily. In terms of assembly, interacts with a member of the CDK2/CDK protein kinases to form a serine/threonine kinase holoenzyme complex. The cyclin subunit imparts substrate specificity to the complex. Interacts (via C-terminus) with Z600 (via C-terminus). As to expression, isoform II is ubiquitous in early embryos and, prior to mitosis 14, is rapidly degraded in all cells except the pole (germ) cells. Expressed during G1 phase in proliferating peripheral nervous system cells. Constitutive expression in embryonic cycles lacking a G1 phase.

It is found in the nucleus. Its function is as follows. Essential for the control of the cell cycle at the G1/S (start) transition. Targeted by archipelago for degradation by the SFC ubiquitin ligase complex. This is G1/S-specific cyclin-E (CycE) from Drosophila melanogaster (Fruit fly).